Consider the following 100-residue polypeptide: uncharacterized protein (100 aa).

A signal peptide spans 1-18; that stretch reads MWGFLVLKARWLVTPVRT. The tract at residues 48–86 is disordered; sequence LTRGVIRVSPQERSQQNQSAPKGPTPSTRPKPRTLGPQA. Residues 58–69 are compositionally biased toward polar residues; the sequence is QERSQQNQSAPK. The N-linked (GlcNAc...) asparagine glycan is linked to N64.

It localises to the secreted. This is an uncharacterized protein from Homo sapiens (Human).